The following is a 313-amino-acid chain: D-alanine--D-alanine ligase (313 aa).

The 201-residue stretch at 104-304 (KQALVPHGIP…YSDLVEAIIA (201 aa)) folds into the ATP-grasp domain. 130–187 (PLPRPYVLKPVNEGSSVGVAIVTAEGNYGSPISAASKGPWQEFDQLLAEPFIRGRELT) contributes to the ATP binding site. Mg(2+) contacts are provided by Asp-255, Glu-271, and Asn-273.

This sequence belongs to the D-alanine--D-alanine ligase family. Mg(2+) is required as a cofactor. The cofactor is Mn(2+).

The protein localises to the cytoplasm. The catalysed reaction is 2 D-alanine + ATP = D-alanyl-D-alanine + ADP + phosphate + H(+). Its pathway is cell wall biogenesis; peptidoglycan biosynthesis. In terms of biological role, cell wall formation. This Novosphingobium aromaticivorans (strain ATCC 700278 / DSM 12444 / CCUG 56034 / CIP 105152 / NBRC 16084 / F199) protein is D-alanine--D-alanine ligase.